Here is a 671-residue protein sequence, read N- to C-terminus: ABC transporter ATP-binding protein/permease wht-1 (671 aa).

The Cytoplasmic portion of the chain corresponds to 1 to 408; sequence MHKAPISTLI…SWLTVIRDPN (408 aa). The ABC transporter domain maps to 64 to 310; that stretch reads TNFVDRFRNN…FEKCGYPCPA (247 aa). Position 100 to 107 (100 to 107) interacts with ATP; the sequence is GSSGAGKT. The helical transmembrane segment at 409-429 threads the bilayer; it reads LLSVRLLQILITAFITGIVFF. Topologically, residues 430–451 are extracellular; it reads QTPVTPATIISINGIMFNHIRN. The chain crosses the membrane as a helical span at residues 452 to 472; it reads MNFMLQFPNVPVITAELPIVL. The Cytoplasmic portion of the chain corresponds to 473–497; it reads RENANGVYRTSAYFLAKNIAELPQY. A helical membrane pass occupies residues 498-518; the sequence is IILPILYNTIVYWMSGLYPNF. Topologically, residues 519–525 are extracellular; that stretch reads WNYCFAS. A helical membrane pass occupies residues 526 to 546; that stretch reads LVTILITNVAISISYAVATIF. The Cytoplasmic portion of the chain corresponds to 547-550; it reads ANTD. Residues 551–571 form a helical membrane-spanning segment; it reads VAMTILPIFVVPIMAFGGFFI. At 572 to 644 the chain is on the extracellular side; that stretch reads TFDAIPSYFK…DFSASHKIFD (73 aa). Residues 645–665 form a helical membrane-spanning segment; the sequence is ISILFGMFIGIRIIAYVALLI. Over 666 to 671 the chain is Cytoplasmic; it reads RSYNNT.

This sequence belongs to the ABC transporter superfamily. ABCG family. Eye pigment precursor importer (TC 3.A.1.204) subfamily. Expressed in the intestine in both larvae and adults. Expressed in the gut of males.

It is found in the membrane. In terms of biological role, required for efficient RNA interference (RNAi). Plays a role in germline development. The sequence is that of ABC transporter ATP-binding protein/permease wht-1 from Caenorhabditis elegans.